A 114-amino-acid chain; its full sequence is Nascent polypeptide-associated complex protein (114 aa).

The NAC-A/B domain occupies 5–69 (PSQFKNLERM…AKEAQKEEPK (65 aa)).

It belongs to the NAC-alpha family. As to quaternary structure, homodimer. Interacts with the ribosome. Binds ribosomal RNA.

Its function is as follows. Contacts the emerging nascent chain on the ribosome. The protein is Nascent polypeptide-associated complex protein of Sulfurisphaera tokodaii (strain DSM 16993 / JCM 10545 / NBRC 100140 / 7) (Sulfolobus tokodaii).